The following is a 248-amino-acid chain: Large ribosomal subunit protein uL4 (248 aa).

2 disordered regions span residues 48-95 and 210-248; these read GTHK…GPVP and AFSEDRDNPGTSLPKSPTPEDSSDATKARSSRHDDRTGA. The span at 233–248 shows a compositional bias: basic and acidic residues; that stretch reads DATKARSSRHDDRTGA.

The protein belongs to the universal ribosomal protein uL4 family. Part of the 50S ribosomal subunit.

Its function is as follows. One of the primary rRNA binding proteins, this protein initially binds near the 5'-end of the 23S rRNA. It is important during the early stages of 50S assembly. It makes multiple contacts with different domains of the 23S rRNA in the assembled 50S subunit and ribosome. Functionally, forms part of the polypeptide exit tunnel. This is Large ribosomal subunit protein uL4 from Tropheryma whipplei (strain TW08/27) (Whipple's bacillus).